We begin with the raw amino-acid sequence, 238 residues long: Proteasome subunit beta type-6 (238 aa).

Residue alanine 2 is modified to N-acetylalanine. Positions 2–33 (AAALAVRGAVSAPAFGPEALTPDWENREVSTG) are cleaved as a propeptide — removed in mature form. Threonine 34 acts as the Nucleophile in catalysis. At threonine 68 the chain carries Phosphothreonine.

It belongs to the peptidase T1B family. As to quaternary structure, the 26S proteasome consists of a 20S proteasome core and two 19S regulatory subunits. The 20S proteasome core is a barrel-shaped complex made of 28 subunits that are arranged in four stacked rings. The two outer rings are each formed by seven alpha subunits, and the two inner rings are formed by seven beta subunits. The proteolytic activity is exerted by three beta-subunits PSMB5, PSMB6 and PSMB7.

It is found in the cytoplasm. The protein localises to the nucleus. The catalysed reaction is Cleavage of peptide bonds with very broad specificity.. Functionally, component of the 20S core proteasome complex involved in the proteolytic degradation of most intracellular proteins. This complex plays numerous essential roles within the cell by associating with different regulatory particles. Associated with two 19S regulatory particles, forms the 26S proteasome and thus participates in the ATP-dependent degradation of ubiquitinated proteins. The 26S proteasome plays a key role in the maintenance of protein homeostasis by removing misfolded or damaged proteins that could impair cellular functions, and by removing proteins whose functions are no longer required. Associated with the PA200 or PA28, the 20S proteasome mediates ubiquitin-independent protein degradation. This type of proteolysis is required in several pathways including spermatogenesis (20S-PA200 complex) or generation of a subset of MHC class I-presented antigenic peptides (20S-PA28 complex). Within the 20S core complex, PSMB6 displays a peptidylglutamyl-hydrolyzing activity also termed postacidic or caspase-like activity, meaning that the peptides bond hydrolysis occurs directly after acidic residues. The sequence is that of Proteasome subunit beta type-6 (Psmb6) from Rattus norvegicus (Rat).